A 336-amino-acid polypeptide reads, in one-letter code: UDP-3-O-acylglucosamine N-acyltransferase (336 aa).

H233 (proton acceptor) is an active-site residue.

It belongs to the transferase hexapeptide repeat family. LpxD subfamily. In terms of assembly, homotrimer.

It catalyses the reaction a UDP-3-O-[(3R)-3-hydroxyacyl]-alpha-D-glucosamine + a (3R)-hydroxyacyl-[ACP] = a UDP-2-N,3-O-bis[(3R)-3-hydroxyacyl]-alpha-D-glucosamine + holo-[ACP] + H(+). The protein operates within bacterial outer membrane biogenesis; LPS lipid A biosynthesis. In terms of biological role, catalyzes the N-acylation of UDP-3-O-acylglucosamine using 3-hydroxyacyl-ACP as the acyl donor. Is involved in the biosynthesis of lipid A, a phosphorylated glycolipid that anchors the lipopolysaccharide to the outer membrane of the cell. This Helicobacter pylori (strain J99 / ATCC 700824) (Campylobacter pylori J99) protein is UDP-3-O-acylglucosamine N-acyltransferase.